The sequence spans 375 residues: Growth/differentiation factor 8 (375 aa).

The signal sequence occupies residues 1-23 (MQKLQLCVYIYLFMLIVAGPVDL). A propeptide spanning residues 24 to 266 (NENSEQKENV…VTDTPKRSRR (243 aa)) is cleaved from the precursor. N-linked (GlcNAc...) asparagine glycosylation is present at Asn71. 4 cysteine pairs are disulfide-bonded: Cys272-Cys282, Cys281-Cys340, Cys309-Cys372, and Cys313-Cys374.

Belongs to the TGF-beta family. Homodimer; disulfide-linked. Interacts with WFIKKN2, leading to inhibit its activity. Interacts with FST3. Post-translationally, synthesized as large precursor molecule that undergoes proteolytic cleavage to generate an N-terminal propeptide and a disulfide linked C-terminal dimer, which is the biologically active molecule. The circulating form consists of a latent complex of the C-terminal dimer and other proteins, including its propeptide, which maintain the C-terminal dimer in a latent, inactive state. Ligand activation requires additional cleavage of the prodomain by a tolloid-like metalloproteinase.

Its subcellular location is the secreted. Functionally, acts specifically as a negative regulator of skeletal muscle growth. This Homo sapiens (Human) protein is Growth/differentiation factor 8 (MSTN).